The following is a 339-amino-acid chain: Phosphate acyltransferase (339 aa).

It belongs to the PlsX family. Homodimer. Probably interacts with PlsY.

It is found in the cytoplasm. The enzyme catalyses a fatty acyl-[ACP] + phosphate = an acyl phosphate + holo-[ACP]. It participates in lipid metabolism; phospholipid metabolism. Catalyzes the reversible formation of acyl-phosphate (acyl-PO(4)) from acyl-[acyl-carrier-protein] (acyl-ACP). This enzyme utilizes acyl-ACP as fatty acyl donor, but not acyl-CoA. The chain is Phosphate acyltransferase from Ruthia magnifica subsp. Calyptogena magnifica.